The chain runs to 673 residues: Sodium/myo-inositol cotransporter 2 (673 aa).

At 1–27 (MESTTSSPQPPPSDALEAFPQKSMEPA) the chain is on the extracellular side. The helical transmembrane segment at 28-48 (DIVVLVLYFLFVLAVGLWSTV) threads the bilayer. At 49–56 (RTKRDTVK) the chain is on the cytoplasmic side. A helical membrane pass occupies residues 57 to 77 (GYFLAGGDMVWWPVGASLFAS). Asn-78 is a topological domain (extracellular). Residues 79–99 (VGSGHFIGLAGSGAAVGISVA) traverse the membrane as a helical segment. At 100–102 (AYE) the chain is on the cytoplasmic side. A helical transmembrane segment spans residues 103-123 (LNGLFSVLMLAWIFLPIYIAG). Residues 124 to 180 (QVTTMPEYLKRRFGGSRIPITLASIYPSTHSLTILQVDMYAGAIFIQQSLHLDLYLA) lie on the Extracellular side of the membrane. The chain crosses the membrane as a helical span at residues 181–201 (IVGLLAVTALYTVAGGLAAVI). Residues 202–208 (YTDALQT) lie on the Cytoplasmic side of the membrane. A helical transmembrane segment spans residues 209–229 (VIMLIGAFILMGYSFAAVGGM). Residues 230 to 272 (EGLKDQYFLALASNRSENSSCGLPREDAFHIFRDPLTSDLPWP) lie on the Extracellular side of the membrane. A helical transmembrane segment spans residues 273-293 (GILFGMSIPSLWYWCTDQVIV). Residues 294-308 (QRSLAAKNLSHAKGG) lie on the Cytoplasmic side of the membrane. A helical membrane pass occupies residues 309–329 (SLMAAYLKVLPLFLMVFPGMV). The Extracellular segment spans residues 330–375 (SRILFPDQVACAHPDICQRVCSNPSGCSDIAYPKLVLELLPTGLRG). A helical membrane pass occupies residues 376–396 (LMMAVMVAALMSSLTSIFNSA). Topologically, residues 397-418 (STIFTMDLWHHIRPRASERELM) are cytoplasmic. Residues 419-439 (IVGRVFVLALVLVSILWIPVV) form a helical membrane-spanning segment. Residues 440-446 (QASQGGQ) lie on the Extracellular side of the membrane. A helical membrane pass occupies residues 447-467 (LFIYIQSISSYLQPPVAVVFI). Topologically, residues 468-479 (MGCFWKRTNEKG) are cytoplasmic. A helical membrane pass occupies residues 480–500 (AFSGLILGLLLGLVRLILDFV). The Extracellular portion of the chain corresponds to 501–521 (YVQPRCDQPDDRPAVVKDVHY). Residues 522 to 542 (LYFSMILSSTTLITVFTVSWF) traverse the membrane as a helical segment. The Cytoplasmic portion of the chain corresponds to 543-652 (TETPSKEMVS…SLEENPLVKT (110 aa)). Residues 653–673 (LLDVNCIVCISCAIFLWGYFA) traverse the membrane as a helical segment.

Belongs to the sodium:solute symporter (SSF) (TC 2.A.21) family. In terms of tissue distribution, expressed in kidney and small intestine.

The protein localises to the membrane. It is found in the apical cell membrane. The enzyme catalyses myo-inositol(out) + 2 Na(+)(out) = myo-inositol(in) + 2 Na(+)(in). It carries out the reaction 1D-chiro-inositol(out) + 2 Na(+)(out) = 1D-chiro-inositol(in) + 2 Na(+)(in). It catalyses the reaction D-glucose(out) + 2 Na(+)(out) = D-glucose(in) + 2 Na(+)(in). The catalysed reaction is D-xylose(out) + 2 Na(+)(out) = D-xylose(in) + 2 Na(+)(in). MI transport activity inhibited by D-chiro-inositol (DCI), phlorizin (Pz) and sodium (Na(+)). Insulin increases D-chiro-inositol uptake. Involved in the sodium-dependent cotransport of myo-inositol (MI) with a Na(+):MI stoichiometry of 2:1. Exclusively responsible for apical MI transport and absorption in intestine. Can also transport D-chiro-inositol (DCI) but not L-fucose. Exhibits stereospecific cotransport of both D-glucose and D-xylose. May induce apoptosis through the TNF-alpha, PDCD1 pathway. May play a role in the regulation of MI concentration in serum, involving reabsorption in at least the proximal tubule of the kidney. In Rattus norvegicus (Rat), this protein is Sodium/myo-inositol cotransporter 2.